The following is a 235-amino-acid chain: Putative 4'-phosphopantetheinyl transferase HI_0152 (235 aa).

Positions 112, 114, and 155 each coordinate Mg(2+).

This sequence belongs to the P-Pant transferase superfamily. Gsp/Sfp/HetI/AcpT family. Mg(2+) serves as cofactor.

May transfer the 4'-phosphopantetheine moiety from coenzyme A (CoA) to a serine residue of a carrier protein domain. This is Putative 4'-phosphopantetheinyl transferase HI_0152 from Haemophilus influenzae (strain ATCC 51907 / DSM 11121 / KW20 / Rd).